The chain runs to 168 residues: Nicotinamide-nucleotide adenylyltransferase (168 aa).

This sequence belongs to the archaeal NMN adenylyltransferase family.

The protein resides in the cytoplasm. The enzyme catalyses beta-nicotinamide D-ribonucleotide + ATP + H(+) = diphosphate + NAD(+). The protein operates within cofactor biosynthesis; NAD(+) biosynthesis; NAD(+) from nicotinamide D-ribonucleotide: step 1/1. This chain is Nicotinamide-nucleotide adenylyltransferase, found in Methanosphaerula palustris (strain ATCC BAA-1556 / DSM 19958 / E1-9c).